The primary structure comprises 264 residues: 4-hydroxy-tetrahydrodipicolinate reductase (264 aa).

10–15 is an NAD(+) binding site; sequence GCLGRQ. Position 37 (Arg-37) interacts with NADP(+). Residues 99 to 101 and 121 to 124 each bind NAD(+); these read GTT and SANL. The active-site Proton donor/acceptor is the His-153. His-154 is a binding site for (S)-2,3,4,5-tetrahydrodipicolinate. The Proton donor role is filled by Lys-157. Residue 163-164 coordinates (S)-2,3,4,5-tetrahydrodipicolinate; it reads GT.

Belongs to the DapB family.

Its subcellular location is the cytoplasm. It carries out the reaction (S)-2,3,4,5-tetrahydrodipicolinate + NAD(+) + H2O = (2S,4S)-4-hydroxy-2,3,4,5-tetrahydrodipicolinate + NADH + H(+). The catalysed reaction is (S)-2,3,4,5-tetrahydrodipicolinate + NADP(+) + H2O = (2S,4S)-4-hydroxy-2,3,4,5-tetrahydrodipicolinate + NADPH + H(+). Its pathway is amino-acid biosynthesis; L-lysine biosynthesis via DAP pathway; (S)-tetrahydrodipicolinate from L-aspartate: step 4/4. Its function is as follows. Catalyzes the conversion of 4-hydroxy-tetrahydrodipicolinate (HTPA) to tetrahydrodipicolinate. The protein is 4-hydroxy-tetrahydrodipicolinate reductase of Ehrlichia ruminantium (strain Gardel).